The following is a 340-amino-acid chain: Pseudaminic acid synthase (340 aa).

Positions 281-337 (SLFVIKDIQKGEALTENNIKALRPNLGLHPKFYKEILGQKASKFLKANTPLSADDIE) constitute an AFP-like domain.

Belongs to the pseudaminic acid synthase family. A divalent metal cation serves as cofactor.

The enzyme catalyses 2,4-diacetamido-2,4,6-trideoxy-beta-L-altrose + phosphoenolpyruvate + H2O = pseudaminate + phosphate. Functionally, catalyzes the fifth step in the biosynthesis of pseudaminic acid, a sialic-acid-like sugar that is used to modify flagellin. Catalyzes the condensation of phosphoenolpyruvate with 2,4-diacetamido-2,4,6-trideoxy-beta-l-altropyranose, forming pseudaminic acid. The polypeptide is Pseudaminic acid synthase (pseI) (Helicobacter pylori (strain ATCC 700392 / 26695) (Campylobacter pylori)).